A 252-amino-acid polypeptide reads, in one-letter code: Imidazole glycerol phosphate synthase subunit HisF (252 aa).

Active-site residues include Asp11 and Asp130.

Belongs to the HisA/HisF family. In terms of assembly, heterodimer of HisH and HisF.

Its subcellular location is the cytoplasm. The enzyme catalyses 5-[(5-phospho-1-deoxy-D-ribulos-1-ylimino)methylamino]-1-(5-phospho-beta-D-ribosyl)imidazole-4-carboxamide + L-glutamine = D-erythro-1-(imidazol-4-yl)glycerol 3-phosphate + 5-amino-1-(5-phospho-beta-D-ribosyl)imidazole-4-carboxamide + L-glutamate + H(+). It functions in the pathway amino-acid biosynthesis; L-histidine biosynthesis; L-histidine from 5-phospho-alpha-D-ribose 1-diphosphate: step 5/9. IGPS catalyzes the conversion of PRFAR and glutamine to IGP, AICAR and glutamate. The HisF subunit catalyzes the cyclization activity that produces IGP and AICAR from PRFAR using the ammonia provided by the HisH subunit. The chain is Imidazole glycerol phosphate synthase subunit HisF from Halothermothrix orenii (strain H 168 / OCM 544 / DSM 9562).